The chain runs to 877 residues: Alanine--tRNA ligase (877 aa).

4 residues coordinate Zn(2+): His-556, His-560, Cys-657, and His-661.

Belongs to the class-II aminoacyl-tRNA synthetase family. Zn(2+) serves as cofactor.

It localises to the cytoplasm. It carries out the reaction tRNA(Ala) + L-alanine + ATP = L-alanyl-tRNA(Ala) + AMP + diphosphate. Catalyzes the attachment of alanine to tRNA(Ala) in a two-step reaction: alanine is first activated by ATP to form Ala-AMP and then transferred to the acceptor end of tRNA(Ala). Also edits incorrectly charged Ser-tRNA(Ala) and Gly-tRNA(Ala) via its editing domain. The chain is Alanine--tRNA ligase from Wolbachia pipientis wMel.